A 238-amino-acid polypeptide reads, in one-letter code: Ribitol-5-phosphate cytidylyltransferase 1 (238 aa).

CTP-binding positions include 7–10 (LAGG) and 81–87 (GSDRNDT).

This sequence belongs to the IspD/TarI cytidylyltransferase family. TarI subfamily.

It catalyses the reaction D-ribitol 5-phosphate + CTP + H(+) = CDP-L-ribitol + diphosphate. It functions in the pathway cell wall biogenesis; poly(ribitol phosphate) teichoic acid biosynthesis. Its function is as follows. Catalyzes the transfer of the cytidylyl group of CTP to D-ribitol 5-phosphate. The polypeptide is Ribitol-5-phosphate cytidylyltransferase 1 (Staphylococcus aureus (strain bovine RF122 / ET3-1)).